Consider the following 526-residue polypeptide: 2-succinyl-5-enolpyruvyl-6-hydroxy-3-cyclohexene-1-carboxylate synthase (526 aa).

Belongs to the TPP enzyme family. MenD subfamily. As to quaternary structure, homodimer. Requires Mg(2+) as cofactor. The cofactor is Mn(2+). Thiamine diphosphate is required as a cofactor.

It carries out the reaction isochorismate + 2-oxoglutarate + H(+) = 5-enolpyruvoyl-6-hydroxy-2-succinyl-cyclohex-3-ene-1-carboxylate + CO2. It participates in quinol/quinone metabolism; 1,4-dihydroxy-2-naphthoate biosynthesis; 1,4-dihydroxy-2-naphthoate from chorismate: step 2/7. It functions in the pathway quinol/quinone metabolism; menaquinone biosynthesis. Its function is as follows. Catalyzes the thiamine diphosphate-dependent decarboxylation of 2-oxoglutarate and the subsequent addition of the resulting succinic semialdehyde-thiamine pyrophosphate anion to isochorismate to yield 2-succinyl-5-enolpyruvyl-6-hydroxy-3-cyclohexene-1-carboxylate (SEPHCHC). This chain is 2-succinyl-5-enolpyruvyl-6-hydroxy-3-cyclohexene-1-carboxylate synthase, found in Bdellovibrio bacteriovorus (strain ATCC 15356 / DSM 50701 / NCIMB 9529 / HD100).